A 145-amino-acid polypeptide reads, in one-letter code: uncharacterized protein (145 aa).

Position 67 is a phosphoserine (serine 67).

In terms of tissue distribution, expressed in retina and retinoblastoma.

This is an uncharacterized protein from Homo sapiens (Human).